We begin with the raw amino-acid sequence, 394 residues long: Mucosal addressin cell adhesion molecule 1 (394 aa).

The signal sequence occupies residues 1-19 (MEPILALLLALGPFQLSRG). Ig-like domains follow at residues 20–107 (QSFQ…ILVY), 108–225 (AFPD…TSPE), and 256–345 (PSTP…YVTG). The Extracellular segment spans residues 20–353 (QSFQVNPPEP…TGQVIPNPSS (334 aa)). N-linked (GlcNAc...) asparagine glycosylation is present at asparagine 42. Disulfide bonds link cysteine 43/cysteine 89, cysteine 47/cysteine 93, and cysteine 130/cysteine 198. The mucin-like stretch occupies residues 219-255 (QSQTSPEPPSTTSAKPYILTSSHTTKAVSTGLSSVAL). An intrachain disulfide couples cysteine 282 to cysteine 330. The helical transmembrane segment at 354–374 (MVALWIGSLVLGLLALAFLAY) threads the bilayer. Topologically, residues 375 to 394 (CLWKRYRPGPLPDSSSCTLL) are cytoplasmic.

As to quaternary structure, homodimer. Detected in Peyer patches and mesenteric lymph nodes but not in spleen.

The protein resides in the membrane. In terms of biological role, cell adhesion leukocyte receptor expressed by mucosal venules, helps to direct lymphocyte traffic into mucosal tissues including the Peyer patches and the intestinal lamina propria. It can bind both the integrin alpha-4/beta-7 and L-selectin, regulating both the passage and retention of leukocytes. This is Mucosal addressin cell adhesion molecule 1 (Madcam1) from Rattus norvegicus (Rat).